A 692-amino-acid polypeptide reads, in one-letter code: Ena/VASP-like protein (692 aa).

One can recognise a WH1 domain in the interval 1–112 (MSEQSICQAR…NAMLFALNIM (112 aa)). Disordered regions lie at residues 116–310 (DGGP…VQKN), 466–518 (SAAM…YEES), and 531–650 (KLRK…NDVS). Polar residues-rich tracts occupy residues 123–132 (RQAQNIQNGP) and 159–169 (STTVSTLQINV). Positions 214–226 (SSKSTNKSSNRTS) are enriched in low complexity. The segment covering 231–267 (LQNSHCGSEPSTSQSSAFSPIRPSNGTVSRSIKQISL) has biased composition (polar residues). Composition is skewed to low complexity over residues 288 to 310 (PSLSFSPCSSSPPVSVTSSVQKN) and 466 to 479 (SAAMVASVGSAPAP). Residues 480–506 (ASGPPPPPPPGPPPPSGGTPPPAPPLP) show a composition bias toward pro residues. The segment at 522–542 (GLAAALAGAKLRKVQRPEDGS) is EVH2 block A. The EVH2 stretch occupies residues 522 to 689 (GLAAALAGAK…DAIRQELSRI (168 aa)). The KLKR motif lies at 531–534 (KLRK). Residues 563–580 (GGLMEEMNKLLAKRRKAA) are EVH2 block B. Residues 597–617 (EDASLSSSPVTRGPTPQNSSD) are compositionally biased toward polar residues. The span at 618-628 (LGKKPWERSNS) shows a compositional bias: basic and acidic residues. Residues 655–689 (DFDRMKQEILEEVVRELHKVKEEIIDAIRQELSRI) are EVH2 block C.

It belongs to the Ena/VASP family. In terms of tissue distribution, during embryonic and tadpole development, expressed in the cement gland, brain, neural tube, myotome and neural placodes, including the otic, lateral line and olfactory placodes. All isoforms show similar spatial expression patterns.

It localises to the cytoplasm. The protein localises to the cytoskeleton. It is found in the stress fiber. The protein resides in the cell projection. Its subcellular location is the lamellipodium. In terms of biological role, ena/VASP proteins are actin-associated proteins involved in a range of processes dependent on cytoskeleton remodeling and cell polarity such as axon guidance and lamellipodial and filopodial dynamics in migrating cells. Evl enhances actin nucleation and polymerization. The chain is Ena/VASP-like protein from Xenopus laevis (African clawed frog).